Reading from the N-terminus, the 716-residue chain is Leucine-rich repeat neuronal protein 1 (716 aa).

An N-terminal signal peptide occupies residues 1-25; the sequence is MARMSFVIAACQLVLGLLMTSLTES. The region spanning 26–72 is the LRRNT domain; that stretch reads SIQNSECPQLCVCEIRPWFTPQSTYREATTVDCNDLRLTRIPSNLSS. The Extracellular segment spans residues 26–631; the sequence is SIQNSECPQL…DISDQETSTA (606 aa). 11 LRR repeats span residues 73–95, 96–117, 120–141, 144–165, 168–189, 192–213, 216–237, 240–261, 264–285, 313–335, and 338–359; these read DTQV…QQLF, NLTE…GLAN, QLTT…CLQD, NLQE…AFAG, NLLR…WFDS, NLEI…NFKP, NLRS…ALVG, SLES…ALQK, NLKF…DFKN, ELTK…AFRS, and ALES…TVES. N-linked (GlcNAc...) asparagine glycosylation is found at Asn-96 and Asn-117. The region spanning 371-424 is the LRRCT domain; that stretch reads NPLRCDCVIHWINSNKTNIRFMEPLSMFCAMPPEYKGHQVKEVLIQDSSEQCLP. Asn-385 is a glycosylation site (N-linked (GlcNAc...) asparagine). One can recognise an Ig-like C2-type domain in the interval 424 to 515; sequence PMISHDSFPN…GADTRVATIK (92 aa). Cys-447 and Cys-499 form a disulfide bridge. N-linked (GlcNAc...) asparagine glycosylation occurs at Asn-517. The region spanning 525–617 is the Fibronectin type-III domain; the sequence is QVLKIYVKQT…SCVNVTTKNA (93 aa). Residues 632 to 652 form a helical membrane-spanning segment; that stretch reads LAAVMGSMFAVISLASIAVYF. Residues 653–716 are Cytoplasmic-facing; sequence AKRFKRKNYH…VDTSRSYYMW (64 aa). The span at 691–700 shows a compositional bias: basic and acidic residues; that stretch reads DSEKDKDGSA. The interval 691-716 is disordered; that stretch reads DSEKDKDGSADTKPTQVDTSRSYYMW. Over residues 702 to 716 the composition is skewed to polar residues; that stretch reads TKPTQVDTSRSYYMW.

It is found in the membrane. In Homo sapiens (Human), this protein is Leucine-rich repeat neuronal protein 1 (LRRN1).